We begin with the raw amino-acid sequence, 251 residues long: Imidazole glycerol phosphate synthase subunit HisF (251 aa).

Catalysis depends on residues Asp11 and Asp130.

Belongs to the HisA/HisF family. In terms of assembly, heterodimer of HisH and HisF.

It is found in the cytoplasm. It catalyses the reaction 5-[(5-phospho-1-deoxy-D-ribulos-1-ylimino)methylamino]-1-(5-phospho-beta-D-ribosyl)imidazole-4-carboxamide + L-glutamine = D-erythro-1-(imidazol-4-yl)glycerol 3-phosphate + 5-amino-1-(5-phospho-beta-D-ribosyl)imidazole-4-carboxamide + L-glutamate + H(+). The protein operates within amino-acid biosynthesis; L-histidine biosynthesis; L-histidine from 5-phospho-alpha-D-ribose 1-diphosphate: step 5/9. IGPS catalyzes the conversion of PRFAR and glutamine to IGP, AICAR and glutamate. The HisF subunit catalyzes the cyclization activity that produces IGP and AICAR from PRFAR using the ammonia provided by the HisH subunit. The sequence is that of Imidazole glycerol phosphate synthase subunit HisF from Pelagibacter ubique (strain HTCC1062).